The sequence spans 447 residues: UDP-N-acetylmuramate--L-alanine ligase (447 aa).

108 to 114 (GSHGKTS) lines the ATP pocket.

This sequence belongs to the MurCDEF family.

It is found in the cytoplasm. The catalysed reaction is UDP-N-acetyl-alpha-D-muramate + L-alanine + ATP = UDP-N-acetyl-alpha-D-muramoyl-L-alanine + ADP + phosphate + H(+). Its pathway is cell wall biogenesis; peptidoglycan biosynthesis. Cell wall formation. The sequence is that of UDP-N-acetylmuramate--L-alanine ligase from Listeria monocytogenes serovar 1/2a (strain ATCC BAA-679 / EGD-e).